Consider the following 287-residue polypeptide: Pyridoxal kinase PdxY (287 aa).

Substrate contacts are provided by residues Ser-9 and 44–45; that span reads MQ. ATP is bound by residues Asp-111, Ala-142, Glu-147, and Lys-180. Asp-221 serves as a coordination point for substrate.

It belongs to the pyridoxine kinase family. PdxY subfamily. As to quaternary structure, homodimer. The cofactor is Mg(2+).

The catalysed reaction is pyridoxal + ATP = pyridoxal 5'-phosphate + ADP + H(+). The protein operates within cofactor metabolism; pyridoxal 5'-phosphate salvage; pyridoxal 5'-phosphate from pyridoxal: step 1/1. Functionally, pyridoxal kinase involved in the salvage pathway of pyridoxal 5'-phosphate (PLP). Catalyzes the phosphorylation of pyridoxal to PLP. In Burkholderia thailandensis (strain ATCC 700388 / DSM 13276 / CCUG 48851 / CIP 106301 / E264), this protein is Pyridoxal kinase PdxY.